We begin with the raw amino-acid sequence, 189 residues long: Protein shisa-like-2A (189 aa).

The next 2 helical transmembrane spans lie at 48-68 (SFFP…LVGL) and 70-90 (TAAV…YLFI). The segment at 98-189 (LDPGLSLQTT…PTPGPHGPVP (92 aa)) is disordered. A compositionally biased stretch (polar residues) spans 140–171 (NTHLESNKKQTVSPTCLPQNQFMATVTASNIP).

It belongs to the shisa family.

It is found in the membrane. In Mus musculus (Mouse), this protein is Protein shisa-like-2A (Shisal2a).